The primary structure comprises 78 residues: Acyl carrier protein (78 aa).

One can recognise a Carrier domain in the interval 2-77 (STIEERVKKI…EAIDYINAHA (76 aa)). Ser-37 is modified (O-(pantetheine 4'-phosphoryl)serine).

Belongs to the acyl carrier protein (ACP) family. In terms of processing, 4'-phosphopantetheine is transferred from CoA to a specific serine of apo-ACP by AcpS. This modification is essential for activity because fatty acids are bound in thioester linkage to the sulfhydryl of the prosthetic group.

It is found in the cytoplasm. It participates in lipid metabolism; fatty acid biosynthesis. Functionally, carrier of the growing fatty acid chain in fatty acid biosynthesis. The protein is Acyl carrier protein of Stutzerimonas stutzeri (strain A1501) (Pseudomonas stutzeri).